The primary structure comprises 277 residues: Bis(5'-nucleosyl)-tetraphosphatase, symmetrical (277 aa).

The protein belongs to the Ap4A hydrolase family.

It catalyses the reaction P(1),P(4)-bis(5'-adenosyl) tetraphosphate + H2O = 2 ADP + 2 H(+). Functionally, hydrolyzes diadenosine 5',5'''-P1,P4-tetraphosphate to yield ADP. This is Bis(5'-nucleosyl)-tetraphosphatase, symmetrical from Chromobacterium violaceum (strain ATCC 12472 / DSM 30191 / JCM 1249 / CCUG 213 / NBRC 12614 / NCIMB 9131 / NCTC 9757 / MK).